The sequence spans 218 residues: Imidazole glycerol phosphate synthase subunit HisH (218 aa).

One can recognise a Glutamine amidotransferase type-1 domain in the interval 5 to 213 (RLAVIDYEAG…VEFVARCSPL (209 aa)). Cys-83 functions as the Nucleophile in the catalytic mechanism. Catalysis depends on residues His-188 and Glu-190.

In terms of assembly, heterodimer of HisH and HisF.

The protein localises to the cytoplasm. The enzyme catalyses 5-[(5-phospho-1-deoxy-D-ribulos-1-ylimino)methylamino]-1-(5-phospho-beta-D-ribosyl)imidazole-4-carboxamide + L-glutamine = D-erythro-1-(imidazol-4-yl)glycerol 3-phosphate + 5-amino-1-(5-phospho-beta-D-ribosyl)imidazole-4-carboxamide + L-glutamate + H(+). The catalysed reaction is L-glutamine + H2O = L-glutamate + NH4(+). It functions in the pathway amino-acid biosynthesis; L-histidine biosynthesis; L-histidine from 5-phospho-alpha-D-ribose 1-diphosphate: step 5/9. IGPS catalyzes the conversion of PRFAR and glutamine to IGP, AICAR and glutamate. The HisH subunit catalyzes the hydrolysis of glutamine to glutamate and ammonia as part of the synthesis of IGP and AICAR. The resulting ammonia molecule is channeled to the active site of HisF. This chain is Imidazole glycerol phosphate synthase subunit HisH, found in Synechococcus sp. (strain JA-2-3B'a(2-13)) (Cyanobacteria bacterium Yellowstone B-Prime).